A 298-amino-acid chain; its full sequence is Nitrogenase iron protein (298 aa).

13-20 (GKGGIGKS) contributes to the ATP binding site. Cys101 is a [4Fe-4S] cluster binding site. The residue at position 104 (Arg104) is an ADP-ribosylarginine; by dinitrogenase reductase ADP-ribosyltransferase. Cys135 provides a ligand contact to [4Fe-4S] cluster.

The protein belongs to the NifH/BchL/ChlL family. In terms of assembly, homodimer. It depends on [4Fe-4S] cluster as a cofactor. The reversible ADP-ribosylation of Arg-104 inactivates the nitrogenase reductase and regulates nitrogenase activity.

The enzyme catalyses N2 + 8 reduced [2Fe-2S]-[ferredoxin] + 16 ATP + 16 H2O = H2 + 8 oxidized [2Fe-2S]-[ferredoxin] + 2 NH4(+) + 16 ADP + 16 phosphate + 6 H(+). Its function is as follows. The key enzymatic reactions in nitrogen fixation are catalyzed by the nitrogenase complex, which has 2 components: the iron protein and the molybdenum-iron protein. This chain is Nitrogenase iron protein, found in Cyanothece sp. (strain PCC 7425 / ATCC 29141).